Consider the following 150-residue polypeptide: Protein ADM2 (150 aa).

The N-terminal stretch at 1–25 (MAQLLMVTVTLGCISLLYLLPGTLS) is a signal peptide. Positions 26–100 (GSLGKGLRHS…HPGPQRPTGS (75 aa)) are excised as a propeptide. The interval 28–102 (LGKGLRHSRP…GPQRPTGSRR (75 aa)) is disordered. Residues Cys112 and Cys117 are joined by a disulfide bond. A Tyrosine amide modification is found at Tyr149.

The protein belongs to the adrenomedullin family. In terms of tissue distribution, high expression detected in the submaxillary gland, kidney, stomach, and mesentery, followed by the pituitary, lung, pancreas, intestines, spleen, thymus and ovary. Expressed mainly in the intermediate lobe of the pituitary, with sporadic in the anterior lobe.

The protein localises to the secreted. In terms of biological role, intermedin/ADM2 is a peptide hormone that plays a role as physiological regulator of gastrointestinal and cardiovascular bioactivities mediated by the CALCRL-RAMPs receptor complexes. Activates the cAMP-dependent pathway through interaction with CALCRL-RAMP3 receptor complex. This Mus musculus (Mouse) protein is Protein ADM2.